Consider the following 331-residue polypeptide: GTP 3',8-cyclase (331 aa).

In terms of domain architecture, Radical SAM core spans 9-233 (PFGRRITYLR…VRSSKVTGGP (225 aa)). Arginine 18 is a GTP binding site. Positions 25 and 29 each coordinate [4Fe-4S] cluster. Tyrosine 31 contributes to the S-adenosyl-L-methionine binding site. [4Fe-4S] cluster is bound at residue cysteine 32. GTP is bound at residue arginine 67. Glycine 71 contacts S-adenosyl-L-methionine. Threonine 98 contacts GTP. Serine 122 contributes to the S-adenosyl-L-methionine binding site. Lysine 159 lines the GTP pocket. Methionine 193 provides a ligand contact to S-adenosyl-L-methionine. 2 residues coordinate [4Fe-4S] cluster: cysteine 257 and cysteine 260. 262–264 (RVR) is a GTP binding site. Residue cysteine 274 coordinates [4Fe-4S] cluster.

This sequence belongs to the radical SAM superfamily. MoaA family. In terms of assembly, monomer and homodimer. Requires [4Fe-4S] cluster as cofactor.

It carries out the reaction GTP + AH2 + S-adenosyl-L-methionine = (8S)-3',8-cyclo-7,8-dihydroguanosine 5'-triphosphate + 5'-deoxyadenosine + L-methionine + A + H(+). Its pathway is cofactor biosynthesis; molybdopterin biosynthesis. Functionally, catalyzes the cyclization of GTP to (8S)-3',8-cyclo-7,8-dihydroguanosine 5'-triphosphate. This chain is GTP 3',8-cyclase, found in Ectopseudomonas mendocina (strain ymp) (Pseudomonas mendocina).